A 440-amino-acid chain; its full sequence is Serine/threonine-protein kinase 2 (440 aa).

Residues 85–440 enclose the Protein kinase domain; it reads NDDFYHISTG…FSNWINGESC (356 aa). Residues 91-99 and Lys-115 each bind ATP; that span reads ISTGGYGIV. Catalysis depends on Asp-306, which acts as the Proton acceptor.

It belongs to the protein kinase superfamily. Ser/Thr protein kinase family. Poxviruses subfamily. In terms of processing, phosphorylated in vivo. Autophosphorylated in vitro.

It localises to the host endoplasmic reticulum. Its subcellular location is the host endoplasmic reticulum-Golgi intermediate compartment. The enzyme catalyses L-seryl-[protein] + ATP = O-phospho-L-seryl-[protein] + ADP + H(+). It carries out the reaction L-threonyl-[protein] + ATP = O-phospho-L-threonyl-[protein] + ADP + H(+). Its function is as follows. Essential serine-protein kinase involved in the early stage of virion morphogenesis. The sequence is that of Serine/threonine-protein kinase 2 (OPG054) from Sus scrofa (Pig).